The following is a 534-amino-acid chain: CTP synthase (534 aa).

The segment at 1-267 (MTKYIFVTGG…DQIVCDHLKL (267 aa)) is amidoligase domain. S13 serves as a coordination point for CTP. S13 contributes to the UTP binding site. 14–19 (SIGKGI) serves as a coordination point for ATP. L-glutamine is bound at residue Y54. D71 contributes to the ATP binding site. The Mg(2+) site is built by D71 and E141. Residues 148–150 (DIE), 188–193 (KTKPTQ), and K224 contribute to the CTP site. UTP is bound by residues 188-193 (KTKPTQ) and K224. The region spanning 292–534 (KIALVGKYVE…FVTAAVENAK (243 aa)) is the Glutamine amidotransferase type-1 domain. G354 serves as a coordination point for L-glutamine. The active-site Nucleophile; for glutamine hydrolysis is C381. Residues 382-385 (LGMQ), E405, and R463 contribute to the L-glutamine site. Active-site residues include H508 and E510.

Belongs to the CTP synthase family. As to quaternary structure, homotetramer.

The catalysed reaction is UTP + L-glutamine + ATP + H2O = CTP + L-glutamate + ADP + phosphate + 2 H(+). The enzyme catalyses L-glutamine + H2O = L-glutamate + NH4(+). It catalyses the reaction UTP + NH4(+) + ATP = CTP + ADP + phosphate + 2 H(+). It functions in the pathway pyrimidine metabolism; CTP biosynthesis via de novo pathway; CTP from UDP: step 2/2. Allosterically activated by GTP, when glutamine is the substrate; GTP has no effect on the reaction when ammonia is the substrate. The allosteric effector GTP functions by stabilizing the protein conformation that binds the tetrahedral intermediate(s) formed during glutamine hydrolysis. Inhibited by the product CTP, via allosteric rather than competitive inhibition. In terms of biological role, catalyzes the ATP-dependent amination of UTP to CTP with either L-glutamine or ammonia as the source of nitrogen. Regulates intracellular CTP levels through interactions with the four ribonucleotide triphosphates. This chain is CTP synthase, found in Streptococcus thermophilus (strain CNRZ 1066).